The chain runs to 61 residues: Metallothionein-II, hippocampal (61 aa).

The residue at position 1 (Met-1) is an N-acetylmethionine. The segment at 1 to 29 is beta; that stretch reads MDPNCSCATGGSCTCANSCTCKACKCASC. 20 residues coordinate a divalent metal cation: Cys-5, Cys-7, Cys-13, Cys-15, Cys-19, Cys-21, Cys-24, Cys-26, Cys-29, Cys-33, Cys-34, Cys-36, Cys-37, Cys-41, Cys-44, Cys-48, Cys-50, Cys-57, Cys-59, and Cys-60. The segment at 30 to 61 is alpha; that stretch reads KKSCCSCCPVGCAKCAQGCICKGASDKCSCCA.

Belongs to the metallothionein superfamily. Type 1 family.

Its function is as follows. Metallothioneins have a high content of cysteine residues that bind various heavy metals; these proteins are transcriptionally regulated by both heavy metals and glucocorticoids. This isoform may play a role in regulating the transport, accumulation, and compartmentation of zinc in the hippocampus. This is Metallothionein-II, hippocampal from Bos taurus (Bovine).